Consider the following 56-residue polypeptide: MSRLFTLVLIVLAMNVMMAIISDPVVEAVGCEECPMHCKGKNAKPTCDDGVCNCNV.

The N-terminal stretch at 1–28 (MSRLFTLVLIVLAMNVMMAIISDPVVEA) is a signal peptide. Intrachain disulfides connect cysteine 31–cysteine 47, cysteine 34–cysteine 52, and cysteine 38–cysteine 54.

Expressed by the venom gland.

It is found in the secreted. Functionally, blocks small conductance calcium-activated potassium channels (KCNN, SK). Weakly inhibits the Kv7.1/KCNQ1 channel (10 uM of the toxin inhibits currents by 23.3%). Low toxicity by intracerebroventricular injection into mice. This chain is Potassium channel toxin alpha-KTx 9.1, found in Olivierus martensii (Manchurian scorpion).